The chain runs to 426 residues: Serine--tRNA ligase (426 aa).

Residue 230–232 (TAE) coordinates L-serine. Residue 261 to 263 (RSE) coordinates ATP. L-serine is bound at residue E284. Residue 348–351 (EISS) participates in ATP binding. Residue S384 participates in L-serine binding.

This sequence belongs to the class-II aminoacyl-tRNA synthetase family. Type-1 seryl-tRNA synthetase subfamily. In terms of assembly, homodimer. The tRNA molecule binds across the dimer.

It is found in the cytoplasm. It carries out the reaction tRNA(Ser) + L-serine + ATP = L-seryl-tRNA(Ser) + AMP + diphosphate + H(+). The catalysed reaction is tRNA(Sec) + L-serine + ATP = L-seryl-tRNA(Sec) + AMP + diphosphate + H(+). Its pathway is aminoacyl-tRNA biosynthesis; selenocysteinyl-tRNA(Sec) biosynthesis; L-seryl-tRNA(Sec) from L-serine and tRNA(Sec): step 1/1. In terms of biological role, catalyzes the attachment of serine to tRNA(Ser). Is also able to aminoacylate tRNA(Sec) with serine, to form the misacylated tRNA L-seryl-tRNA(Sec), which will be further converted into selenocysteinyl-tRNA(Sec). This is Serine--tRNA ligase from Novosphingobium aromaticivorans (strain ATCC 700278 / DSM 12444 / CCUG 56034 / CIP 105152 / NBRC 16084 / F199).